Consider the following 462-residue polypeptide: 3-deoxy-D-manno-octulosonic acid transferase (462 aa).

The helical; Signal-anchor transmembrane segment at 2–22 (MLLYYILSFILLPVYFIIIFI) threads the bilayer. One can recognise an RPE1 insert domain in the interval 47 to 90 (SLLDLQMSVNQEGFKVDTEHKATSYVYIHRNASLMYKLSLERSY). Glu-104 (proton acceptor) is an active-site residue. CMP is bound by residues 308-309 (PR), 349-351 (FGE), and 374-377 (NILE).

This sequence belongs to the glycosyltransferase group 1 family.

The protein localises to the cell inner membrane. It catalyses the reaction lipid IVA (E. coli) + CMP-3-deoxy-beta-D-manno-octulosonate = alpha-Kdo-(2-&gt;6)-lipid IVA (E. coli) + CMP + H(+). Its pathway is bacterial outer membrane biogenesis; LPS core biosynthesis. Functionally, involved in lipopolysaccharide (LPS) biosynthesis. Catalyzes the transfer of 3-deoxy-D-manno-octulosonate (Kdo) residue(s) from CMP-Kdo to lipid IV(A), the tetraacyldisaccharide-1,4'-bisphosphate precursor of lipid A. This is 3-deoxy-D-manno-octulosonic acid transferase (waaA) from Rickettsia typhi (strain ATCC VR-144 / Wilmington).